The primary structure comprises 129 residues: Small ribosomal subunit protein uS11 (129 aa).

Belongs to the universal ribosomal protein uS11 family. In terms of assembly, part of the 30S ribosomal subunit. Interacts with proteins S7 and S18. Binds to IF-3.

In terms of biological role, located on the platform of the 30S subunit, it bridges several disparate RNA helices of the 16S rRNA. Forms part of the Shine-Dalgarno cleft in the 70S ribosome. The protein is Small ribosomal subunit protein uS11 of Zymomonas mobilis subsp. mobilis (strain ATCC 31821 / ZM4 / CP4).